The primary structure comprises 267 residues: uncharacterized protein (267 aa).

The stretch at 50–90 (PGLNAVTASKFSPDGRWLLNIADGSGYVQLWDTAKGERVKT) is one WD repeat.

This is an uncharacterized protein from Deinococcus radiodurans (strain ATCC 13939 / DSM 20539 / JCM 16871 / CCUG 27074 / LMG 4051 / NBRC 15346 / NCIMB 9279 / VKM B-1422 / R1).